The sequence spans 397 residues: Formate-dependent phosphoribosylglycinamide formyltransferase (397 aa).

N(1)-(5-phospho-beta-D-ribosyl)glycinamide contacts are provided by residues 21-22 and Glu-81; that span reads EL. Residues Arg-113, Lys-154, 194–197, and Glu-202 each bind ATP; that span reads EEFV. The ATP-grasp domain occupies 118–312; that stretch reads RFAAEKLKLP…EFQIHVRSAI (195 aa). Glu-271 and Glu-283 together coordinate Mg(2+). N(1)-(5-phospho-beta-D-ribosyl)glycinamide contacts are provided by residues Asp-290, Lys-361, and 368–369; that span reads RR.

This sequence belongs to the PurK/PurT family. As to quaternary structure, homodimer.

It catalyses the reaction N(1)-(5-phospho-beta-D-ribosyl)glycinamide + formate + ATP = N(2)-formyl-N(1)-(5-phospho-beta-D-ribosyl)glycinamide + ADP + phosphate + H(+). It participates in purine metabolism; IMP biosynthesis via de novo pathway; N(2)-formyl-N(1)-(5-phospho-D-ribosyl)glycinamide from N(1)-(5-phospho-D-ribosyl)glycinamide (formate route): step 1/1. In terms of biological role, involved in the de novo purine biosynthesis. Catalyzes the transfer of formate to 5-phospho-ribosyl-glycinamide (GAR), producing 5-phospho-ribosyl-N-formylglycinamide (FGAR). Formate is provided by PurU via hydrolysis of 10-formyl-tetrahydrofolate. This is Formate-dependent phosphoribosylglycinamide formyltransferase from Saccharolobus solfataricus (strain ATCC 35092 / DSM 1617 / JCM 11322 / P2) (Sulfolobus solfataricus).